The chain runs to 338 residues: Malate dehydrogenase, mitochondrial (338 aa).

The N-terminal 24 residues, 1–24 (MLSALARPAGAALRRSFSTSAQNN), are a transit peptide targeting the mitochondrion. NAD(+) contacts are provided by residues 31 to 37 (GASGGIG) and aspartate 57. Serine 33 carries O-linked (GlcNAc) serine glycosylation. N6-acetyllysine; alternate occurs at positions 78 and 91. An N6-succinyllysine; alternate mark is found at lysine 78 and lysine 91. The substrate site is built by arginine 104 and arginine 110. Residues asparagine 117 and 140-142 (ISN) contribute to the NAD(+) site. Asparagine 142 is a substrate binding site. Lysine 165 carries the post-translational modification N6-acetyllysine. Position 176 (arginine 176) interacts with substrate. Lysine 185 bears the N6-acetyllysine; alternate mark. Lysine 185 is modified (N6-succinyllysine; alternate). The active-site Proton acceptor is histidine 200. An N6-succinyllysine modification is found at lysine 203. N6-acetyllysine; alternate occurs at positions 215 and 239. 2 positions are modified to N6-succinyllysine; alternate: lysine 215 and lysine 239. N6-malonyllysine; alternate is present on lysine 239. Position 246 is a phosphoserine (serine 246). Methionine 251 provides a ligand contact to NAD(+). An N6-succinyllysine modification is found at lysine 269. Lysine 296, lysine 301, lysine 307, lysine 314, and lysine 324 each carry N6-acetyllysine; alternate. N6-succinyllysine; alternate is present on residues lysine 296, lysine 301, lysine 307, lysine 314, and lysine 324. At lysine 307 the chain carries N6-malonyllysine; alternate. Phosphoserine is present on serine 326. N6-acetyllysine; alternate occurs at positions 328, 329, and 335. An N6-succinyllysine; alternate modification is found at lysine 328. An N6-malonyllysine; alternate modification is found at lysine 329. Lysine 335 carries the N6-succinyllysine; alternate modification.

The protein belongs to the LDH/MDH superfamily. MDH type 1 family. Homodimer. Acetylation is enhanced after treatment either with trichostin A (TCA) or with nicotinamide (NAM) with the appearance of tri- and tetraacetylations. Glucose also increases acetylation.

Its subcellular location is the mitochondrion matrix. It catalyses the reaction (S)-malate + NAD(+) = oxaloacetate + NADH + H(+). Its activity is regulated as follows. Enzyme activity is enhanced by acetylation. This chain is Malate dehydrogenase, mitochondrial (MDH2), found in Bos taurus (Bovine).